Reading from the N-terminus, the 387-residue chain is Succinate--CoA ligase [ADP-forming] subunit beta (387 aa).

Residues 9–236 enclose the ATP-grasp domain; it reads KELFAKHNVP…KDATDPLELK (228 aa). ATP is bound by residues K45, 52–54, S94, and E99; that span reads GRG. The Mg(2+) site is built by N191 and D205. Residues N256 and 318–320 each bind substrate; that span reads GIT.

It belongs to the succinate/malate CoA ligase beta subunit family. As to quaternary structure, heterotetramer of two alpha and two beta subunits. Mg(2+) serves as cofactor.

It catalyses the reaction succinate + ATP + CoA = succinyl-CoA + ADP + phosphate. The enzyme catalyses GTP + succinate + CoA = succinyl-CoA + GDP + phosphate. The protein operates within carbohydrate metabolism; tricarboxylic acid cycle; succinate from succinyl-CoA (ligase route): step 1/1. In terms of biological role, succinyl-CoA synthetase functions in the citric acid cycle (TCA), coupling the hydrolysis of succinyl-CoA to the synthesis of either ATP or GTP and thus represents the only step of substrate-level phosphorylation in the TCA. The beta subunit provides nucleotide specificity of the enzyme and binds the substrate succinate, while the binding sites for coenzyme A and phosphate are found in the alpha subunit. In Mycolicibacterium gilvum (strain PYR-GCK) (Mycobacterium gilvum (strain PYR-GCK)), this protein is Succinate--CoA ligase [ADP-forming] subunit beta.